The following is a 176-amino-acid chain: Ferritin, spleen middle subunit (176 aa).

The region spanning 7–156 is the Ferritin-like diiron domain; sequence QNYHRDCEAA…DFITNLSRMD (150 aa). Positions 24, 59, 62, 104, and 138 each coordinate Fe cation.

This sequence belongs to the ferritin family. In terms of assembly, in spleen, forms a homomer. The functional molecule forms a roughly spherical shell with a diameter of 12 nm and contains a central cavity into which the insoluble mineral iron core is deposited. Spleen (at protein level).

The enzyme catalyses 4 Fe(2+) + O2 + 4 H(+) = 4 Fe(3+) + 2 H2O. Its function is as follows. Stores iron in a soluble, non-toxic, readily available form. Important for iron homeostasis. Has ferroxidase activity. Iron is taken up in the ferrous form and deposited as ferric hydroxides after oxidation. The chain is Ferritin, spleen middle subunit from Trematomus bernacchii (Emerald rockcod).